Here is an 862-residue protein sequence, read N- to C-terminus: Transcription factor E2F7 (862 aa).

2 consecutive DNA-binding regions follow at residues 140 to 209 (RKQK…CWHG) and 279 to 364 (RKDK…KWIG). Disordered regions lie at residues 561 to 592 (PGSDSPTLEETTMSKQERPTKRQLNDKDDAPL), 617 to 643 (TPEQLQHVSREEEYNTEPVTKHSNVGE), and 788 to 862 (KADS…SAGN). Residues 564–574 (DSPTLEETTMS) show a composition bias toward polar residues. A compositionally biased stretch (basic and acidic residues) spans 575 to 590 (KQERPTKRQLNDKDDA). Composition is skewed to polar residues over residues 633 to 643 (EPVTKHSNVGE) and 832 to 851 (DVSSSRKPQRTQTRTSSSAQ).

It belongs to the E2F/DP family. Homodimer and heterodimer: mainly forms homodimers and, to a lesser extent, heterodimers with e2f8.

Its subcellular location is the nucleus. Atypical E2F transcription factor that participates in various processes such as angiogenesis and polyploidization of specialized cells. Mainly acts as a transcription repressor that binds DNA independently of DP proteins and specifically recognizes the E2 recognition site 5'-TTTC[CG]CGC-3'. Directly represses transcription of classical E2F transcription factors such as e2f1. Acts as a regulator of S-phase by recognizing and binding the E2-related site 5'-TTCCCGCC-3' and mediating repression of G1/S-regulated genes. Acts as a promoter of sprouting angiogenesis, possibly by acting as a transcription activator. This is Transcription factor E2F7 (e2f7) from Xenopus tropicalis (Western clawed frog).